The sequence spans 694 residues: Elongation factor G (694 aa).

The tr-type G domain maps to 11–285; the sequence is KDYRNIGIMA…AVIDYLPSPL (275 aa). GTP contacts are provided by residues 20 to 27, 84 to 88, and 138 to 141; these read AHIDAGKT, DTPGH, and NKMD.

Belongs to the TRAFAC class translation factor GTPase superfamily. Classic translation factor GTPase family. EF-G/EF-2 subfamily.

The protein resides in the cytoplasm. Functionally, catalyzes the GTP-dependent ribosomal translocation step during translation elongation. During this step, the ribosome changes from the pre-translocational (PRE) to the post-translocational (POST) state as the newly formed A-site-bound peptidyl-tRNA and P-site-bound deacylated tRNA move to the P and E sites, respectively. Catalyzes the coordinated movement of the two tRNA molecules, the mRNA and conformational changes in the ribosome. The protein is Elongation factor G of Mycoplasma mobile (strain ATCC 43663 / 163K / NCTC 11711) (Mesomycoplasma mobile).